A 408-amino-acid polypeptide reads, in one-letter code: Putative gustatory receptor 98c (408 aa).

Residues 1–42 (MEMEAKRSRLLTTARPYLQVLSLFGLTPPAEFFTRTLRKRRR) are Cytoplasmic-facing. Residues 43 to 63 (FCWMAGYSLYLIAILLMVFYE) form a helical membrane-spanning segment. Topologically, residues 64–92 (FHANIVSLHLEIYKFHVEDFSKVMGRTQK) are extracellular. Residues 93–113 (FLIVAIATCNQLNILLNYGRL) form a helical membrane-spanning segment. Residues 114–146 (GLIYDEIANLDLGIDKSSKNFCGKSHWWSFRLR) are Cytoplasmic-facing. The chain crosses the membrane as a helical span at residues 147–167 (LTLSIGLWMVIIIGVIPRLTL). Over 168 to 183 (GRAGPFFHWVNQVLTQ) the chain is Extracellular. Residues 184–204 (IILIMLQLKGPEYCLFVLLVY) form a helical membrane-spanning segment. Over 205-261 (ELILRTRHVLEQLKDDLEDFDCGARIQELCVTLKQNQLLIGRIWRLVDEIGAYFRWS) the chain is Cytoplasmic. The chain crosses the membrane as a helical span at residues 262–282 (MTLLFLYNGLTILHVVNWAII). The Extracellular segment spans residues 283–296 (RSIDPNDCCQLNRL). Residues 297–317 (GSITFLSFNLLLTCFFSECCV) form a helical membrane-spanning segment. The Cytoplasmic segment spans residues 318-367 (KTYNSISYILHQIGCLPTAEEFQMLKMGLKEYILQMQHLKLLFTCGGLFD). The helical transmembrane segment at 368-388 (INIKLFGGMLVTLCGYVIIIV) threads the bilayer. Residues 389 to 408 (QFKIQDFALIGYRQNTSDTS) are Extracellular-facing. The N-linked (GlcNAc...) asparagine glycan is linked to N403.

The protein belongs to the insect chemoreceptor superfamily. Gustatory receptor (GR) family. Gr2a subfamily.

The protein resides in the cell membrane. Its function is as follows. Probable gustatory receptor which mediates acceptance or avoidance behavior, depending on its substrates. This Drosophila melanogaster (Fruit fly) protein is Putative gustatory receptor 98c (Gr98c).